The primary structure comprises 99 residues: Small ribosomal subunit protein eS24 (99 aa).

It belongs to the eukaryotic ribosomal protein eS24 family. In terms of assembly, may be present in 2 copies per 70S ribosome. Part of the 30S ribosomal subunit, where it binds 16S rRNA at its canonical site at the bse of the body, as well as a possible second 50S binding site near 23S rRNA helix 45.

This is Small ribosomal subunit protein eS24 from Pyrococcus furiosus (strain ATCC 43587 / DSM 3638 / JCM 8422 / Vc1).